Reading from the N-terminus, the 394-residue chain is Na(+)/H(+) antiporter NhaA (394 aa).

Helical transmembrane passes span 24–44 (AGLV…SPLA), 58–78 (LSVQ…LVGL), 96–116 (TLPG…YVML), 126–146 (GWAI…SLLG), 155–175 (IFLA…IAIF), 180–200 (INVA…SLCA), 214–234 (AVLW…GVLL), 267–287 (VAFA…FASI), 300–320 (VAAG…ALMV), 336–356 (VLGV…IGLL), and 370–390 (GILA…RIAG).

It belongs to the NhaA Na(+)/H(+) (TC 2.A.33) antiporter family.

It localises to the cell inner membrane. It catalyses the reaction Na(+)(in) + 2 H(+)(out) = Na(+)(out) + 2 H(+)(in). Na(+)/H(+) antiporter that extrudes sodium in exchange for external protons. The polypeptide is Na(+)/H(+) antiporter NhaA (Azorhizobium caulinodans (strain ATCC 43989 / DSM 5975 / JCM 20966 / LMG 6465 / NBRC 14845 / NCIMB 13405 / ORS 571)).